The sequence spans 234 residues: uncharacterized protein (234 aa).

The tRNA-binding domain maps to 103–211; sequence LAKKVPFVVC…SHIKIGKSFL (109 aa).

This is an uncharacterized protein from Mycoplasma pneumoniae (strain ATCC 29342 / M129 / Subtype 1) (Mycoplasmoides pneumoniae).